Reading from the N-terminus, the 263-residue chain is Triosephosphate isomerase (263 aa).

10–12 contributes to the substrate binding site; it reads NWK. The active-site Electrophile is histidine 104. The active-site Proton acceptor is glutamate 176. Substrate contacts are provided by residues glycine 182, serine 221, and 242-243; that span reads GG.

The protein belongs to the triosephosphate isomerase family. Homodimer.

The protein resides in the cytoplasm. The catalysed reaction is D-glyceraldehyde 3-phosphate = dihydroxyacetone phosphate. The protein operates within carbohydrate biosynthesis; gluconeogenesis. Its pathway is carbohydrate degradation; glycolysis; D-glyceraldehyde 3-phosphate from glycerone phosphate: step 1/1. Involved in the gluconeogenesis. Catalyzes stereospecifically the conversion of dihydroxyacetone phosphate (DHAP) to D-glyceraldehyde-3-phosphate (G3P). This Haemophilus influenzae (strain ATCC 51907 / DSM 11121 / KW20 / Rd) protein is Triosephosphate isomerase.